Here is a 264-residue protein sequence, read N- to C-terminus: Indole-3-glycerol phosphate synthase (264 aa).

The protein belongs to the TrpC family.

The catalysed reaction is 1-(2-carboxyphenylamino)-1-deoxy-D-ribulose 5-phosphate + H(+) = (1S,2R)-1-C-(indol-3-yl)glycerol 3-phosphate + CO2 + H2O. The protein operates within amino-acid biosynthesis; L-tryptophan biosynthesis; L-tryptophan from chorismate: step 4/5. The protein is Indole-3-glycerol phosphate synthase of Xylella fastidiosa (strain M12).